The sequence spans 332 residues: Galectin-4 (332 aa).

Galectin domains lie at 19-150 (YHNP…INFI) and 203-332 (FNGR…YVQI). Residue 265 to 271 (WGSEERK) participates in a beta-D-galactoside binding. Ser-267 is modified (phosphoserine).

As to quaternary structure, monomer.

Its function is as follows. Galectin that binds lactose and a related range of sugars. May be involved in the assembly of adherens junctions. This chain is Galectin-4 (LGALS4), found in Bos taurus (Bovine).